We begin with the raw amino-acid sequence, 201 residues long: Large ribosomal subunit protein uL4 (201 aa).

The segment at 46–71 (QKTRAEITGTGKKPWRQKGTGRARAG) is disordered.

This sequence belongs to the universal ribosomal protein uL4 family. In terms of assembly, part of the 50S ribosomal subunit.

Functionally, one of the primary rRNA binding proteins, this protein initially binds near the 5'-end of the 23S rRNA. It is important during the early stages of 50S assembly. It makes multiple contacts with different domains of the 23S rRNA in the assembled 50S subunit and ribosome. Forms part of the polypeptide exit tunnel. In Shewanella amazonensis (strain ATCC BAA-1098 / SB2B), this protein is Large ribosomal subunit protein uL4.